A 212-amino-acid polypeptide reads, in one-letter code: 2,3-bisphosphoglycerate-dependent phosphoglycerate mutase (212 aa).

Residues 9 to 16 (RHGQSEWN), 22 to 23 (TG), arginine 61, 88 to 91 (ERDY), lysine 99, 115 to 116 (RR), and 159 to 160 (GN) each bind substrate. Catalysis depends on histidine 10, which acts as the Tele-phosphohistidine intermediate. Glutamate 88 (proton donor/acceptor) is an active-site residue.

Belongs to the phosphoglycerate mutase family. BPG-dependent PGAM subfamily. Homodimer.

The catalysed reaction is (2R)-2-phosphoglycerate = (2R)-3-phosphoglycerate. The protein operates within carbohydrate degradation; glycolysis; pyruvate from D-glyceraldehyde 3-phosphate: step 3/5. Its function is as follows. Catalyzes the interconversion of 2-phosphoglycerate and 3-phosphoglycerate. The chain is 2,3-bisphosphoglycerate-dependent phosphoglycerate mutase from Methylobacterium radiotolerans (strain ATCC 27329 / DSM 1819 / JCM 2831 / NBRC 15690 / NCIMB 10815 / 0-1).